Reading from the N-terminus, the 271-residue chain is Phosphatidylinositol transfer protein beta isoform (271 aa).

Position 215 is an N6-acetyllysine (Lys215). Ser262 is subject to Phosphoserine.

It belongs to the PtdIns transfer protein family. PI transfer class I subfamily. In terms of processing, constitutive phosphorylation of Ser-262 has no effect on phospholipid transfer activity but is required for Golgi targeting. As to expression, widely expressed in various tissues including brain.

Its subcellular location is the golgi apparatus. The protein localises to the golgi apparatus membrane. The protein resides in the endoplasmic reticulum membrane. The catalysed reaction is a 1,2-diacyl-sn-glycero-3-phosphocholine(in) = a 1,2-diacyl-sn-glycero-3-phosphocholine(out). It catalyses the reaction a 1,2-diacyl-sn-glycero-3-phospho-(1D-myo-inositol)(in) = a 1,2-diacyl-sn-glycero-3-phospho-(1D-myo-inositol)(out). It carries out the reaction an N-(acyl)-sphingosylphosphocholine(in) = an N-(acyl)-sphingosylphosphocholine(out). Its activity is regulated as follows. Phosphatidylinositol transfer activity is inhibited by N-ethylmaleimide. Catalyzes the transfer of phosphatidylinositol and phosphatidylcholine between membranes. Also catalyzes the transfer of sphingomyelin. Required for COPI-mediated retrograde transport from the Golgi to the endoplasmic reticulum; phosphatidylinositol and phosphatidylcholine transfer activity is essential for this function. In Homo sapiens (Human), this protein is Phosphatidylinositol transfer protein beta isoform (PITPNB).